The following is a 297-amino-acid chain: Haloalkane dehalogenase (297 aa).

One can recognise an AB hydrolase-1 domain in the interval 47–148 (PPIVLLHGEP…AIARLVVANG (102 aa)). Catalysis depends on Asp-123, which acts as the Nucleophile. The active-site Proton donor is the Asp-250. His-279 serves as the catalytic Proton acceptor.

This sequence belongs to the haloalkane dehalogenase family. Type 1 subfamily. In terms of assembly, monomer.

It carries out the reaction 1-haloalkane + H2O = a halide anion + a primary alcohol + H(+). In terms of biological role, catalyzes hydrolytic cleavage of carbon-halogen bonds in halogenated aliphatic compounds, leading to the formation of the corresponding primary alcohols, halide ions and protons. This chain is Haloalkane dehalogenase, found in Mycobacterium marinum (strain ATCC BAA-535 / M).